Reading from the N-terminus, the 273-residue chain is Putative inactive beta-glucuronidase protein GUSBP11 (273 aa).

The tract at residues 1–20 (MTAAETGRGKPRLGGGSGLG) is disordered.

The protein belongs to the glycosyl hydrolase 2 family.

The sequence is that of Putative inactive beta-glucuronidase protein GUSBP11 (GUSBP11) from Homo sapiens (Human).